Consider the following 357-residue polypeptide: Peptide chain release factor 1 (357 aa).

Gln-234 bears the N5-methylglutamine mark.

The protein belongs to the prokaryotic/mitochondrial release factor family. Post-translationally, methylated by PrmC. Methylation increases the termination efficiency of RF1.

It localises to the cytoplasm. In terms of biological role, peptide chain release factor 1 directs the termination of translation in response to the peptide chain termination codons UAG and UAA. This chain is Peptide chain release factor 1, found in Alkaliphilus oremlandii (strain OhILAs) (Clostridium oremlandii (strain OhILAs)).